A 324-amino-acid polypeptide reads, in one-letter code: Myb-like DNA-binding protein myb-1 (324 aa).

HTH myb-type domains are found at residues 4-59 (MPDQ…KPGL) and 60-110 (NHGP…NRKK). Positions 107-231 (NRKKNQLRRQ…PTGSTLRLLT (125 aa)) are disordered. Over residues 155 to 165 (RRPSSPSSFND) the composition is skewed to polar residues. Residues 166–175 (SLHHRVHESI) show a composition bias toward basic and acidic residues. Composition is skewed to low complexity over residues 183 to 192 (QQQQQQQQQQ) and 222 to 231 (PTGSTLRLLT).

It localises to the nucleus. The sequence is that of Myb-like DNA-binding protein myb-1 (rca-1) from Neurospora crassa (strain ATCC 24698 / 74-OR23-1A / CBS 708.71 / DSM 1257 / FGSC 987).